The primary structure comprises 236 residues: 7-cyano-7-deazaguanine synthase (236 aa).

13–23 serves as a coordination point for ATP; the sequence is FSGGQDSTVCL. Zn(2+) contacts are provided by C200, C215, C218, and C221.

This sequence belongs to the QueC family. Zn(2+) serves as cofactor.

The catalysed reaction is 7-carboxy-7-deazaguanine + NH4(+) + ATP = 7-cyano-7-deazaguanine + ADP + phosphate + H2O + H(+). The protein operates within purine metabolism; 7-cyano-7-deazaguanine biosynthesis. Catalyzes the ATP-dependent conversion of 7-carboxy-7-deazaguanine (CDG) to 7-cyano-7-deazaguanine (preQ(0)). This is 7-cyano-7-deazaguanine synthase from Parvibaculum lavamentivorans (strain DS-1 / DSM 13023 / NCIMB 13966).